We begin with the raw amino-acid sequence, 129 residues long: Large ribosomal subunit protein bL32m (129 aa).

The transit peptide at 1–63 directs the protein to the mitochondrion; sequence MAAMTAAAAA…LEDIWEGILR (63 aa). Positions 94, 97, 107, and 110 each coordinate Zn(2+).

Belongs to the bacterial ribosomal protein bL32 family. Component of the mitochondrial large ribosomal subunit (mt-LSU). Mature N.crassa 74S mitochondrial ribosomes consist of a small (37S) and a large (54S) subunit. The 37S small subunit contains a 16S ribosomal RNA (16S mt-rRNA) and 32 different proteins. The 54S large subunit contains a 23S rRNA (23S mt-rRNA) and 42 different proteins. bL32m has a zinc binding site. In terms of processing, MRPL32 precursor is processed by the m-AAA protease (composed of YTA12/RCA1 and YTA10/AFG3), which cleaves the N-terminal transit peptide. Cleavage by the m-AAA protease takes place prior to assembly into the large subunit, an essential step for mitochondrial ribosome (mitoribosome) assembly. Proper processing by the m-AAA protease is dependent on the zinc-binding region within the tightly folded C-terminal domain of MRPL32: zinc-dependent folding halts degradation initiated from the N-terminus and triggers the release of mature MRPL32.

Its subcellular location is the mitochondrion. Functionally, component of the mitochondrial ribosome (mitoribosome), a dedicated translation machinery responsible for the synthesis of mitochondrial genome-encoded proteins, including at least some of the essential transmembrane subunits of the mitochondrial respiratory chain. The mitoribosomes are attached to the mitochondrial inner membrane and translation products are cotranslationally integrated into the membrane. This Neurospora crassa (strain ATCC 24698 / 74-OR23-1A / CBS 708.71 / DSM 1257 / FGSC 987) protein is Large ribosomal subunit protein bL32m (mrpl32).